A 336-amino-acid polypeptide reads, in one-letter code: 3-isopropylmalate dehydrogenase (336 aa).

Substrate is bound by residues arginine 87, arginine 97, arginine 121, and aspartate 211. Aspartate 211, aspartate 235, and aspartate 239 together coordinate Mg(2+). 271-283 (GSAPDIAGQGIAD) provides a ligand contact to NAD(+).

This sequence belongs to the isocitrate and isopropylmalate dehydrogenases family. LeuB type 2 subfamily. In terms of assembly, homodimer. Mg(2+) serves as cofactor. Requires Mn(2+) as cofactor.

The protein localises to the cytoplasm. The catalysed reaction is (2R,3S)-3-isopropylmalate + NAD(+) = 4-methyl-2-oxopentanoate + CO2 + NADH. Its pathway is amino-acid biosynthesis; L-leucine biosynthesis; L-leucine from 3-methyl-2-oxobutanoate: step 3/4. Its function is as follows. Catalyzes the oxidation of 3-carboxy-2-hydroxy-4-methylpentanoate (3-isopropylmalate) to 3-carboxy-4-methyl-2-oxopentanoate. The product decarboxylates to 4-methyl-2 oxopentanoate. This Mycolicibacterium gilvum (strain PYR-GCK) (Mycobacterium gilvum (strain PYR-GCK)) protein is 3-isopropylmalate dehydrogenase.